A 276-amino-acid chain; its full sequence is NH(3)-dependent NAD(+) synthetase (276 aa).

43–50 (GISGGVDS) serves as a coordination point for ATP. Residue Asp-49 coordinates Mg(2+). Arg-146 provides a ligand contact to deamido-NAD(+). ATP is bound at residue Thr-166. Glu-171 provides a ligand contact to Mg(2+). Residues Lys-179 and Asp-186 each contribute to the deamido-NAD(+) site. Residues Lys-195 and Thr-217 each contribute to the ATP site. 266-267 (HK) is a deamido-NAD(+) binding site.

Belongs to the NAD synthetase family. In terms of assembly, homodimer.

The enzyme catalyses deamido-NAD(+) + NH4(+) + ATP = AMP + diphosphate + NAD(+) + H(+). Its pathway is cofactor biosynthesis; NAD(+) biosynthesis; NAD(+) from deamido-NAD(+) (ammonia route): step 1/1. Functionally, catalyzes the ATP-dependent amidation of deamido-NAD to form NAD. Uses ammonia as a nitrogen source. In Shewanella woodyi (strain ATCC 51908 / MS32), this protein is NH(3)-dependent NAD(+) synthetase.